We begin with the raw amino-acid sequence, 284 residues long: RNase adapter protein RapZ (284 aa).

8–15 (GRSGSGKS) serves as a coordination point for ATP. 56–59 (DVRN) contributes to the GTP binding site. The tract at residues 266 to 284 (RSRGKNVQSRHRTLEKRKT) is RNA-binding.

This sequence belongs to the RapZ-like family. RapZ subfamily. As to quaternary structure, homotrimer.

In terms of biological role, modulates the synthesis of GlmS, by affecting the processing and stability of the regulatory small RNA GlmZ. When glucosamine-6-phosphate (GlcN6P) concentrations are high in the cell, RapZ binds GlmZ and targets it to cleavage by RNase E. Consequently, GlmZ is inactivated and unable to activate GlmS synthesis. Under low GlcN6P concentrations, RapZ is sequestered and inactivated by an other regulatory small RNA, GlmY, preventing GlmZ degradation and leading to synthesis of GlmS. The polypeptide is RNase adapter protein RapZ (Salmonella typhimurium (strain LT2 / SGSC1412 / ATCC 700720)).